The sequence spans 206 residues: Putative apoptosis inhibitor 021L (206 aa).

Residues 95 to 105 (TSKSPVSNQPS) are compositionally biased toward polar residues. Residues 95–114 (TSKSPVSNQPSPEEDEPIPD) are disordered. The RING-type zinc finger occupies 157 to 195 (CVVCQANVRNVVFVPCNHLATCISCSANPLMPKKCPMCR).

Belongs to the IIV-6 193R family.

Plays a role early in infection by preventing host cell apoptosis. This is Putative apoptosis inhibitor 021L from Aedes vexans (Inland floodwater mosquito).